A 564-amino-acid chain; its full sequence is Septation ring formation regulator EzrA (564 aa).

Residues 1 to 2 (MV) lie on the Extracellular side of the membrane. Residues 3 to 21 (FVISVILAIIVILTIGLIL) form a helical membrane-spanning segment. Topologically, residues 22–564 (RKRIYDKVDH…IEENQLTLNR (543 aa)) are cytoplasmic. Coiled-coil stretches lie at residues 101 to 140 (ANNI…REEV), 168 to 215 (FDKK…MEQF), 251 to 436 (GFDK…KKSN), and 468 to 537 (DIAK…ELSL).

This sequence belongs to the EzrA family.

It localises to the cell membrane. In terms of biological role, negative regulator of FtsZ ring formation; modulates the frequency and position of FtsZ ring formation. Inhibits FtsZ ring formation at polar sites. Interacts either with FtsZ or with one of its binding partners to promote depolymerization. The polypeptide is Septation ring formation regulator EzrA (Oceanobacillus iheyensis (strain DSM 14371 / CIP 107618 / JCM 11309 / KCTC 3954 / HTE831)).